A 382-amino-acid chain; its full sequence is MSTDQSPCPSATGAELLPPPDGTLAIVPVGDIRLESGAVIPDVHLGVQRWGELSPGLDNVVLVEHALTGDSHVVGPADDVHQLPGWWNGMVGPGAPMDTDEWCVIATNVLGGCKGSTGPGSTAPDGKPWGSRFPAISIRDQVTAEAALFDRIGIHRLAAVVGGSMGGMRVLEWMVGAPERVAAALVLAVGARATADQIGTQTTQIAAITADPDWQGGDYHDTGRAPTTGMGIARRIAHLTYRTEDELDHRFANHAQDGEDPFDGGRWAVQSYLEHQAEKLCRRFDPATYVLLTEAMNRHDVGRGRGGVAAALAATPVPCVVGGVDSDRLYPLHTQQELADLLPGCARLEVVHSRDGHDGFLTETAAIGKLLVETMRLARAHR.

A disordered region spans residues 1–20 (MSTDQSPCPSATGAELLPPP). Positions 59 to 363 (NVVLVEHALT…RDGHDGFLTE (305 aa)) constitute an AB hydrolase-1 domain. The active-site Nucleophile is the S164. A substrate-binding site is contributed by R234. Catalysis depends on residues D327 and H357. Residue D358 coordinates substrate.

Belongs to the AB hydrolase superfamily. MetX family. As to quaternary structure, homodimer.

Its subcellular location is the cytoplasm. The enzyme catalyses L-homoserine + acetyl-CoA = O-acetyl-L-homoserine + CoA. It participates in amino-acid biosynthesis; L-methionine biosynthesis via de novo pathway; O-acetyl-L-homoserine from L-homoserine: step 1/1. Its function is as follows. Transfers an acetyl group from acetyl-CoA to L-homoserine, forming acetyl-L-homoserine. The sequence is that of Homoserine O-acetyltransferase from Nocardia farcinica (strain IFM 10152).